Reading from the N-terminus, the 199-residue chain is Oligoribonuclease (199 aa).

An Exonuclease domain is found at 5–170 (LVWIDCEMTG…ADIRESIREL (166 aa)). The active site involves Y127.

The protein belongs to the oligoribonuclease family.

The protein resides in the cytoplasm. Functionally, 3'-to-5' exoribonuclease specific for small oligoribonucleotides. This Rhodococcus jostii (strain RHA1) protein is Oligoribonuclease.